Reading from the N-terminus, the 326-residue chain is Autophagy protein 5 (326 aa).

Lysine 163 participates in a covalent cross-link: Glycyl lysine isopeptide (Lys-Gly) (interchain with G-Cter in atg12).

Belongs to the ATG5 family. As to quaternary structure, conjugated with atg12. In terms of processing, conjugated to atg12; which is essential for autophagy.

The protein resides in the preautophagosomal structure membrane. Its function is as follows. Involved in cytoplasm to vacuole transport (Cvt) and autophagic vesicle formation. Autophagy is essential for maintenance of amino acid levels and protein synthesis under nitrogen starvation. Required for selective autophagic degradation of the nucleus (nucleophagy). Also required for mitophagy, which eliminates defective or superfluous mitochondria in order to fulfill cellular energy requirements and prevent excess ROS production. Conjugation with atg12, through a ubiquitin-like conjugating system involving atg7 as an E1-like activating enzyme and atg10 as an E2-like conjugating enzyme, is essential for its function. The atg12-atg5 conjugate acts as an E3-like enzyme which is required for lipidation of atg8 and atg8 association to the vesicle membranes. This chain is Autophagy protein 5 (atg5), found in Aspergillus fumigatus (strain ATCC MYA-4609 / CBS 101355 / FGSC A1100 / Af293) (Neosartorya fumigata).